A 321-amino-acid polypeptide reads, in one-letter code: Histidine N-alpha-methyltransferase (321 aa).

L-histidine is bound at residue tyrosine 56. S-adenosyl-L-methionine-binding positions include glycine 86, lysine 92, aspartate 113, and 141-142 (DF). L-histidine contacts are provided by residues asparagine 166, tyrosine 206, and 282-284 (EVS).

It belongs to the methyltransferase superfamily. EgtD family. In terms of assembly, monomer.

It catalyses the reaction L-histidine + 3 S-adenosyl-L-methionine = hercynine + 3 S-adenosyl-L-homocysteine + 3 H(+). It participates in amino-acid biosynthesis; ergothioneine biosynthesis. Catalyzes the SAM-dependent triple methylation of the alpha-amino group of histidine to form hercynine, a step in the biosynthesis pathway of ergothioneine (ERG). ERG is one of the major redox buffers which protects bacteria against redox stressors and antibiotics; loss of ERG or mycothiol (MSH, the other major redox buffer in this bacteria) leads to respiratory alterations and bioenergetic deficiencies that negatively impact virulence. The polypeptide is Histidine N-alpha-methyltransferase (egtD) (Mycobacterium tuberculosis (strain CDC 1551 / Oshkosh)).